The chain runs to 478 residues: E3 ubiquitin-protein ligase makorin-1 (478 aa).

C3H1-type zinc fingers lie at residues 51–78 (WTKQ…HDLS), 80–107 (SQSA…HTKP), and 204–231 (EMKK…HGDA). Residues 232–259 (CDMCGLQVLHPVDAAQRSQHIKSCIEAH) form a makorin-type Cys-His region. The RING-type zinc finger occupies 277-331 (CGICMEVVYEKANPSERRFGILSNCNHTYCLKCIRKWRSAKQFESKIIKSCPECR). The segment at 360 to 389 (AMSNKPCRYFDEGRGSCPFGGNCFYKHAYP) adopts a C3H1-type 4 zinc-finger fold.

As to quaternary structure, interacts with p53/TP53 and CDKN1A. Interacts with TERT, modulating telomere length homeostasis. Post-translationally, auto-ubiquitinated; which leads to proteasomal degradation.

The enzyme catalyses S-ubiquitinyl-[E2 ubiquitin-conjugating enzyme]-L-cysteine + [acceptor protein]-L-lysine = [E2 ubiquitin-conjugating enzyme]-L-cysteine + N(6)-ubiquitinyl-[acceptor protein]-L-lysine.. It participates in protein modification; protein ubiquitination. Functionally, E3 ubiquitin ligase catalyzing the covalent attachment of ubiquitin moieties onto substrate proteins. These substrates include FILIP1, p53/TP53, CDKN1A and TERT. Keeps cells alive by suppressing p53/TP53 under normal conditions, but stimulates apoptosis by repressing CDKN1A under stress conditions. Acts as a negative regulator of telomerase. Has negative and positive effects on RNA polymerase II-dependent transcription. In Notamacropus eugenii (Tammar wallaby), this protein is E3 ubiquitin-protein ligase makorin-1 (MKRN1).